Here is a 381-residue protein sequence, read N- to C-terminus: GDP-mannose transporter (381 aa).

At 1–44 (MAEGKKTDDYTIQMDSIDQGNKSFEAPPPPQPRSPPSGSLSNNP) the chain is on the cytoplasmic side. The disordered stretch occupies residues 19 to 41 (QGNKSFEAPPPPQPRSPPSGSLS). The segment covering 26–35 (APPPPQPRSP) has biased composition (pro residues). A helical transmembrane segment spans residues 45 to 65 (ILPVLAYCGSSILMTVMNKYV). At 66 to 70 (LSGTD) the chain is on the lumenal side. Residues 71–91 (FNLNFFLLCIQSLVCIIAIQT) traverse the membrane as a helical segment. Over 92–109 (CKSCGLITYRDFSADEAR) the chain is Cytoplasmic. Residues 110-126 (KWFPITLLLIGMIYTGS) form a helical membrane-spanning segment. Residues 127–133 (KALQFLS) are Lumenal-facing. Residues 134–150 (IPVYTIFKNLTIILIAY) traverse the membrane as a helical segment. The Cytoplasmic portion of the chain corresponds to 151-159 (GEVLWFGGS). Residues 160–181 (VTGLTLFSFGLMVLSSIIAAWA) form a helical membrane-spanning segment. Residues 182–199 (DIKHAVESNGDATAKVST) lie on the Lumenal side of the membrane. Residues 200–220 (LNAGYIWMLVNCLCTSSYVLG) traverse the membrane as a helical segment. At 221–234 (MRKRIKLTNFKDFD) the chain is on the cytoplasmic side. The chain crosses the membrane as a helical span at residues 235–255 (TMFYNNLLSIPVLIVLSAFLE). The Lumenal portion of the chain corresponds to 256–273 (DWSSTNVNRNFPPMDRNS). A helical transmembrane segment spans residues 274-294 (IVFAMILSGLSSVFISYTSAW). Over 295 to 302 (CVRVTSST) the chain is Cytoplasmic. The helical transmembrane segment at 303 to 323 (TYSMVGALNKLPIAISGLIFF) threads the bilayer. Residues 324 to 326 (DAP) are Lumenal-facing. The chain crosses the membrane as a helical span at residues 327 to 347 (VTFPSVSAIVVGFVSGIVYAV). The Cytoplasmic portion of the chain corresponds to 348–381 (AKIKQNAKPRTGVLPTANPPVSASSQSMRDSLRS). Residues 358–381 (TGVLPTANPPVSASSQSMRDSLRS) are disordered. A compositionally biased stretch (polar residues) spans 366–381 (PPVSASSQSMRDSLRS).

Belongs to the TPT transporter family. SLC35D subfamily. As to quaternary structure, homooligomer.

It localises to the golgi apparatus membrane. The protein resides in the cytoplasmic vesicle membrane. The protein localises to the endoplasmic reticulum membrane. Its function is as follows. Involved in the import of GDP-mannose from the cytoplasm into the Golgi lumen. The sequence is that of GDP-mannose transporter (gmt1) from Aspergillus niger (strain ATCC MYA-4892 / CBS 513.88 / FGSC A1513).